The following is a 373-amino-acid chain: L-threonine 3-dehydrogenase, mitochondrial (373 aa).

Residues 62 to 67 (GGLGQL), 88 to 90 (DIR), 106 to 107 (DI), Tyr195, Lys199, and Ile225 contribute to the NAD(+) site. Catalysis depends on Tyr195, which acts as the Proton donor/acceptor.

This sequence belongs to the NAD(P)-dependent epimerase/dehydratase family. As to quaternary structure, homodimer.

Its subcellular location is the mitochondrion. It carries out the reaction L-threonine + NAD(+) = (2S)-2-amino-3-oxobutanoate + NADH + H(+). The protein operates within amino-acid degradation; L-threonine degradation via oxydo-reductase pathway; glycine from L-threonine: step 1/2. In terms of biological role, catalyzes the NAD(+)-dependent oxidation of L-threonine to 2-amino-3-ketobutyrate, mediating L-threonine catabolism. The polypeptide is L-threonine 3-dehydrogenase, mitochondrial (Bos taurus (Bovine)).